A 79-amino-acid chain; its full sequence is Protein S100-G (79 aa).

Residue Ser-2 is modified to N-acetylserine. 2 consecutive EF-hand domains span residues 13–48 (IFEK…KGSS) and 45–79 (KGSS…KISQ). Ca(2+) contacts are provided by Gln-26 and Glu-31. The residue at position 47 (Ser-47) is a Phosphoserine. Residues Asp-58, Asn-60, Asp-62, Glu-64, and Glu-69 each coordinate Ca(2+).

The protein belongs to the S-100 family.

In Equus caballus (Horse), this protein is Protein S100-G (S100G).